The chain runs to 346 residues: Uroporphyrinogen decarboxylase (346 aa).

Substrate-binding positions include 21 to 25, phenylalanine 40, aspartate 71, tyrosine 146, serine 201, and histidine 316; that span reads RQAGR.

Belongs to the uroporphyrinogen decarboxylase family. In terms of assembly, homodimer.

Its subcellular location is the cytoplasm. The enzyme catalyses uroporphyrinogen III + 4 H(+) = coproporphyrinogen III + 4 CO2. Its pathway is porphyrin-containing compound metabolism; protoporphyrin-IX biosynthesis; coproporphyrinogen-III from 5-aminolevulinate: step 4/4. Its function is as follows. Catalyzes the decarboxylation of four acetate groups of uroporphyrinogen-III to yield coproporphyrinogen-III. The chain is Uroporphyrinogen decarboxylase from Rickettsia felis (strain ATCC VR-1525 / URRWXCal2) (Rickettsia azadi).